We begin with the raw amino-acid sequence, 150 residues long: Cytochrome c-type biogenesis protein CcmE (150 aa).

At 1-7 (MTRKQKR) the chain is on the cytoplasmic side. The chain crosses the membrane as a helical; Signal-anchor for type II membrane protein span at residues 8 to 28 (LAIIGGGVGFLTAAVLLVMFA). Topologically, residues 29–150 (FSQAVAYFYV…VTLGGKENIQ (122 aa)) are periplasmic. Heme contacts are provided by histidine 123 and tyrosine 127.

This sequence belongs to the CcmE/CycJ family.

The protein resides in the cell inner membrane. Its function is as follows. Heme chaperone required for the biogenesis of c-type cytochromes. Transiently binds heme delivered by CcmC and transfers the heme to apo-cytochromes in a process facilitated by CcmF and CcmH. This Sinorhizobium fredii (strain NBRC 101917 / NGR234) protein is Cytochrome c-type biogenesis protein CcmE.